The primary structure comprises 83 residues: Small ribosomal subunit protein eS21 (83 aa).

The protein belongs to the eukaryotic ribosomal protein eS21 family. In terms of assembly, component of the 40S small ribosomal subunit.

The protein resides in the cytoplasm. Its subcellular location is the cytosol. It is found in the rough endoplasmic reticulum. This Spodoptera frugiperda (Fall armyworm) protein is Small ribosomal subunit protein eS21 (RpS21).